The chain runs to 605 residues: Tegument protein UL47 homolog (605 aa).

The tract at residues 1–75 is disordered; the sequence is MATDNARPRS…DPWKLEPAND (75 aa). Residues 8–17 show a composition bias toward basic residues; that stretch reads PRSRSLRRKS. The span at 54 to 69 shows a compositional bias: basic and acidic residues; it reads GADRDPGTRRGIDPWK.

It belongs to the alphaherpesvirinae HHV-1 UL47 family. In terms of assembly, interacts with US3 kinase. Interacts with UL31 and UL34; these interactions seem important for efficient virion nuclear egress. Interacts with UL41/VHS. In terms of processing, phosphorylated by US3. This phosphorylation is required for proper nuclear localization.

It is found in the virion tegument. Its subcellular location is the host nucleus. It localises to the host cytoplasm. Functionally, tegument protein that can bind to various RNA transcripts. Plays a role in the attenuation of selective viral and cellular mRNA degradation by modulating the activity of host shutoff RNase UL41/VHS. Also plays a role in the primary envelopment of virions in the perinuclear space, probably by interacting with two nuclear egress proteins UL31 and UL34. The chain is Tegument protein UL47 homolog (sORF1) from Amazona oratrix (yellow-headed parrot).